Reading from the N-terminus, the 164-residue chain is MKSVVTTVIAAADAAGRFPSTSDLESVQGSIQRAAARLEAAEKLANNIDAVATEAYNACIKKYPYLNNSGEANSTDTFKAKCARDIKHYLRLIQYSLVVGGTGPLDEWGIAGQREVYRALGLPTAPYVEALSFARNRGCAPRDMSAQALTEYNALLDYAINSLS.

(2R,3E)-phycoerythrobilin-binding residues include C82 and C139.

It belongs to the phycobiliprotein family. Heterodimer of an alpha and a beta chain. Contains two covalently linked bilin chromophores.

It localises to the cellular thylakoid membrane. In terms of biological role, light-harvesting photosynthetic bile pigment-protein from the phycobiliprotein complex. This Microchaete diplosiphon (Fremyella diplosiphon) protein is C-phycoerythrin alpha chain (cpeA).